The primary structure comprises 32 residues: Calcitonin (32 aa).

A disulfide bridge links Cys-1 with Cys-7. Pro-32 is subject to Proline amide.

Belongs to the calcitonin family.

Its subcellular location is the secreted. Its function is as follows. Calcitonin is a peptide hormone that causes a rapid but short-lived drop in the level of calcium and phosphate in blood by promoting the incorporation of those ions in the bones. Calcitonin function is mediated by the calcitonin receptor/CALCR and the CALCR-RAMP2 (AMYR2) receptor complex. This chain is Calcitonin (CALCA), found in Bos taurus (Bovine).